Consider the following 125-residue polypeptide: uncharacterized protein (125 aa).

This is an uncharacterized protein from Pasteurella multocida (strain Pm70).